Here is a 105-residue protein sequence, read N- to C-terminus: Host transcription reprogramming factor 7 (105 aa).

The signal sequence occupies residues 1-19 (MKTKTIFQLVALFAIGATA). The segment at 69-95 (YWCRIGNCNAAFKSLAARCRHEKTAVH) adopts a C2H2-type zinc-finger fold.

The protein resides in the secreted. Its subcellular location is the host nucleus. In terms of biological role, probable secreted effector that translocates into the nuclei of host cells to reprogram the expression of targeted genes by binding on effector binding elements in rice. This is Host transcription reprogramming factor 7 from Pyricularia oryzae (strain 70-15 / ATCC MYA-4617 / FGSC 8958) (Rice blast fungus).